Consider the following 426-residue polypeptide: Dihydroorotase (426 aa).

Zn(2+)-binding residues include His-58 and His-60. Substrate is bound by residues 60–62 and Asn-92; that span reads HLR. Zn(2+)-binding residues include Asp-150, His-177, and His-230. Asn-276 is a substrate binding site. Residue Asp-303 participates in Zn(2+) binding. Asp-303 is an active-site residue. Substrate is bound by residues His-307 and 321 to 322; that span reads FG.

This sequence belongs to the metallo-dependent hydrolases superfamily. DHOase family. Class I DHOase subfamily. Requires Zn(2+) as cofactor.

It carries out the reaction (S)-dihydroorotate + H2O = N-carbamoyl-L-aspartate + H(+). Its pathway is pyrimidine metabolism; UMP biosynthesis via de novo pathway; (S)-dihydroorotate from bicarbonate: step 3/3. Catalyzes the reversible cyclization of carbamoyl aspartate to dihydroorotate. This chain is Dihydroorotase, found in Listeria monocytogenes serotype 4a (strain HCC23).